The following is a 379-amino-acid chain: MEVKPPPGRPQPDSGRRRRRRGEEGHDPKEPEQLRKLFIGGLSFETTDDSLREHFEKWGTLTDCVVMRDPQTKRSRGFGFVTYSCVEEVDAAMCARPHKVDGRVVEPKRAVSREDSVKPGAHLTVKKIFVGGIKEDTEEYNLRDYFEKYGKIETIEVMEDRQSGKKRGFAFVTFDDHDTVDKIVVQKYHTINGHNCEVKKALSKQEMQSAGSQRGRGGGSGNFMGRGGNFGGGGGNFGRGGNFGGRGGYGGGGGGSRGSYGGGDGGYNGFGGDGGNYGGGPGYSSRGGYGGGGPGYGNQGGGYGGGGGGYDGYNEGGNFGGGNYGGGGNYNDFGNYSGQQQSNYGPMKGGSFGGRSSGSPYGGGYGSGGGSGGYGSRRF.

M1 is modified (N-acetylmethionine). Positions 1–10 are enriched in pro residues; sequence MEVKPPPGRP. The interval 1–34 is disordered; that stretch reads MEVKPPPGRPQPDSGRRRRRRGEEGHDPKEPEQL. A Glycyl lysine isopeptide (Lys-Gly) (interchain with G-Cter in SUMO2) cross-link involves residue K4. S14 carries the post-translational modification Phosphoserine. Positions 21–34 are enriched in basic and acidic residues; sequence RGEEGHDPKEPEQL. The RRM 1 domain occupies 35 to 118; that stretch reads RKLFIGGLSF…RAVSREDSVK (84 aa). K36 participates in a covalent cross-link: Glycyl lysine isopeptide (Lys-Gly) (interchain with G-Cter in SUMO2). At S43 the chain carries Phosphoserine. R52 carries the post-translational modification Dimethylated arginine; alternate. R52 carries the post-translational modification Omega-N-methylarginine; alternate. R76 is modified (omega-N-methylarginine). Residues S112 and S116 each carry the phosphoserine modification. A Glycyl lysine isopeptide (Lys-Gly) (interchain with G-Cter in SUMO2) cross-link involves residue K118. A Phosphothreonine modification is found at T124. Residues 126–205 form the RRM 2 domain; that stretch reads KKIFVGGIKE…CEVKKALSKQ (80 aa). K134 is subject to N6-acetyllysine; alternate. K134 participates in a covalent cross-link: Glycyl lysine isopeptide (Lys-Gly) (interchain with G-Cter in SUMO2); alternate. Residues K151 and K182 each participate in a glycyl lysine isopeptide (Lys-Gly) (interchain with G-Cter in SUMO2) cross-link. The tract at residues 204 to 225 is disordered; it reads KQEMQSAGSQRGRGGGSGNFMG. Omega-N-methylarginine; alternate is present on residues R214, R216, R226, R239, and R246. 5 positions are modified to asymmetric dimethylarginine; alternate: R214, R216, R226, R239, and R246. The segment covering 214-225 has biased composition (gly residues); that stretch reads RGRGGGSGNFMG. R257 carries the omega-N-methylarginine modification. R286 is subject to Asymmetric dimethylarginine. The tract at residues 335–379 is disordered; that stretch reads NYSGQQQSNYGPMKGGSFGGRSSGSPYGGGYGSGGGSGGYGSRRF. Gly residues predominate over residues 347–379; the sequence is MKGGSFGGRSSGSPYGGGYGSGGGSGGYGSRRF. S351 carries the phosphoserine modification. An Omega-N-methylarginine modification is found at R355. S359 is modified (phosphoserine). Residues Y361 and Y365 each carry the phosphotyrosine modification. A phosphoserine mark is found at S367 and S371. Y374 carries the post-translational modification Phosphotyrosine. A Phosphoserine modification is found at S376.

Identified in the spliceosome C complex.

The protein resides in the nucleus. In terms of biological role, plays a role in cytoplasmic trafficking of RNA. Binds to the cis-acting response element, A2RE. May be involved in pre-mRNA splicing. The polypeptide is Heterogeneous nuclear ribonucleoprotein A3 (Hnrnpa3) (Mus musculus (Mouse)).